The following is a 614-amino-acid chain: Dihydroxy-acid dehydratase (614 aa).

Asp-81 serves as a coordination point for Mg(2+). Residue Cys-122 coordinates [2Fe-2S] cluster. Residues Asp-123 and Lys-124 each contribute to the Mg(2+) site. Lys-124 carries the post-translational modification N6-carboxylysine. Residue Cys-196 coordinates [2Fe-2S] cluster. Glu-492 contacts Mg(2+). The Proton acceptor role is filled by Ser-518.

It belongs to the IlvD/Edd family. Homodimer. It depends on [2Fe-2S] cluster as a cofactor. Mg(2+) serves as cofactor.

The enzyme catalyses (2R)-2,3-dihydroxy-3-methylbutanoate = 3-methyl-2-oxobutanoate + H2O. The catalysed reaction is (2R,3R)-2,3-dihydroxy-3-methylpentanoate = (S)-3-methyl-2-oxopentanoate + H2O. Its pathway is amino-acid biosynthesis; L-isoleucine biosynthesis; L-isoleucine from 2-oxobutanoate: step 3/4. It participates in amino-acid biosynthesis; L-valine biosynthesis; L-valine from pyruvate: step 3/4. Its function is as follows. Functions in the biosynthesis of branched-chain amino acids. Catalyzes the dehydration of (2R,3R)-2,3-dihydroxy-3-methylpentanoate (2,3-dihydroxy-3-methylvalerate) into 2-oxo-3-methylpentanoate (2-oxo-3-methylvalerate) and of (2R)-2,3-dihydroxy-3-methylbutanoate (2,3-dihydroxyisovalerate) into 2-oxo-3-methylbutanoate (2-oxoisovalerate), the penultimate precursor to L-isoleucine and L-valine, respectively. This Ruegeria sp. (strain TM1040) (Silicibacter sp.) protein is Dihydroxy-acid dehydratase.